The chain runs to 488 residues: 3-octaprenyl-4-hydroxybenzoate carboxy-lyase (488 aa).

A Mn(2+)-binding site is contributed by N172. Prenylated FMN contacts are provided by residues 175–177, 189–191, and 194–195; these read IYR, RWL, and RG. E238 serves as a coordination point for Mn(2+). D287 (proton donor) is an active-site residue.

It belongs to the UbiD family. As to quaternary structure, homohexamer. The cofactor is prenylated FMN. Mn(2+) serves as cofactor.

Its subcellular location is the cell membrane. The catalysed reaction is a 4-hydroxy-3-(all-trans-polyprenyl)benzoate + H(+) = a 2-(all-trans-polyprenyl)phenol + CO2. Its pathway is cofactor biosynthesis; ubiquinone biosynthesis. In terms of biological role, catalyzes the decarboxylation of 3-octaprenyl-4-hydroxy benzoate to 2-octaprenylphenol, an intermediate step in ubiquinone biosynthesis. This chain is 3-octaprenyl-4-hydroxybenzoate carboxy-lyase, found in Pseudomonas aeruginosa (strain LESB58).